The chain runs to 345 residues: Biotin synthase (345 aa).

Positions 66–291 constitute a Radical SAM core domain; sequence PEVEIEGIIS…RTILRFAGGR (226 aa). Residues Cys-81, Cys-85, and Cys-88 each contribute to the [4Fe-4S] cluster site. The [2Fe-2S] cluster site is built by Cys-124, Cys-157, Cys-216, and Arg-286.

This sequence belongs to the radical SAM superfamily. Biotin synthase family. Homodimer. Requires [4Fe-4S] cluster as cofactor. [2Fe-2S] cluster serves as cofactor.

The enzyme catalyses (4R,5S)-dethiobiotin + (sulfur carrier)-SH + 2 reduced [2Fe-2S]-[ferredoxin] + 2 S-adenosyl-L-methionine = (sulfur carrier)-H + biotin + 2 5'-deoxyadenosine + 2 L-methionine + 2 oxidized [2Fe-2S]-[ferredoxin]. The protein operates within cofactor biosynthesis; biotin biosynthesis; biotin from 7,8-diaminononanoate: step 2/2. Functionally, catalyzes the conversion of dethiobiotin (DTB) to biotin by the insertion of a sulfur atom into dethiobiotin via a radical-based mechanism. The chain is Biotin synthase from Mycobacterium leprae (strain Br4923).